A 372-amino-acid polypeptide reads, in one-letter code: Oxysterol-binding protein 3 (372 aa).

Over residues 1-10 (MGKSDRKLTE) the composition is skewed to basic and acidic residues. Residues 1–25 (MGKSDRKLTEENSIENGVKPGKLTE) form a disordered region.

It belongs to the OSBP family.

This Dictyostelium discoideum (Social amoeba) protein is Oxysterol-binding protein 3 (osbC).